The chain runs to 856 residues: Protein phosphatase 2C 32 (856 aa).

A phosphoserine mark is found at S152, S189, and S201. The PPM-type phosphatase domain occupies 269–835 (ESCLESNRNL…DDVSVMVVSL (567 aa)). Residues D307 and G308 each coordinate Mn(2+). 3 disordered regions span residues 340-373 (PSED…KSVV), 388-407 (GNTD…GPGK), and 446-485 (NPST…QISS). Residues 395-407 (ADGPPGDSAGPGK) show a composition bias toward low complexity. Over residues 471–485 (NSGQRHGTKKSQISS) the composition is skewed to polar residues. Residues D763 and D826 each coordinate Mn(2+).

This sequence belongs to the PP2C family. The cofactor is Mg(2+). Mn(2+) is required as a cofactor. In terms of tissue distribution, expressed in roots, leaves, stems, inflorescences, flowers and throughout the shoot meristem.

Its subcellular location is the nucleus. The catalysed reaction is O-phospho-L-seryl-[protein] + H2O = L-seryl-[protein] + phosphate. It catalyses the reaction O-phospho-L-threonyl-[protein] + H2O = L-threonyl-[protein] + phosphate. Insensitive to okadaic acid. Functionally, involved in the regulation of pedicel length and of CLAVATA pathways controlling stem cell identity at shoot and flower meristems. The protein is Protein phosphatase 2C 32 (POL) of Arabidopsis thaliana (Mouse-ear cress).